A 353-amino-acid polypeptide reads, in one-letter code: D-alanine--D-alanine ligase (353 aa).

Positions 141–349 (KAALAGAGLA…LEQLVHELLE (209 aa)) constitute an ATP-grasp domain. Residue 176-231 (ESGLCYPCFIKPANLGSSVGISKARNREELIHGLRLAATLDPRLVVEQGVQARELE) participates in ATP binding. Mg(2+) contacts are provided by Asp-302, Glu-316, and Asn-318.

The protein belongs to the D-alanine--D-alanine ligase family. Mg(2+) is required as a cofactor. It depends on Mn(2+) as a cofactor.

The protein localises to the cytoplasm. The enzyme catalyses 2 D-alanine + ATP = D-alanyl-D-alanine + ADP + phosphate + H(+). It participates in cell wall biogenesis; peptidoglycan biosynthesis. Its function is as follows. Cell wall formation. In Parasynechococcus marenigrum (strain WH8102), this protein is D-alanine--D-alanine ligase.